The primary structure comprises 239 residues: Ribonuclease P protein component 3 (239 aa).

Belongs to the eukaryotic/archaeal RNase P protein component 3 family. As to quaternary structure, consists of a catalytic RNA component and at least 4-5 protein subunits.

The protein resides in the cytoplasm. The catalysed reaction is Endonucleolytic cleavage of RNA, removing 5'-extranucleotides from tRNA precursor.. Its function is as follows. Part of ribonuclease P, a protein complex that generates mature tRNA molecules by cleaving their 5'-ends. In Methanosarcina acetivorans (strain ATCC 35395 / DSM 2834 / JCM 12185 / C2A), this protein is Ribonuclease P protein component 3.